A 184-amino-acid polypeptide reads, in one-letter code: Ribosome-recycling factor (184 aa).

It belongs to the RRF family.

It localises to the cytoplasm. In terms of biological role, responsible for the release of ribosomes from messenger RNA at the termination of protein biosynthesis. May increase the efficiency of translation by recycling ribosomes from one round of translation to another. The protein is Ribosome-recycling factor of Caldicellulosiruptor bescii (strain ATCC BAA-1888 / DSM 6725 / KCTC 15123 / Z-1320) (Anaerocellum thermophilum).